We begin with the raw amino-acid sequence, 217 residues long: Probable transaldolase (217 aa).

Lys83 (schiff-base intermediate with substrate) is an active-site residue.

The protein belongs to the transaldolase family. Type 3B subfamily.

The protein localises to the cytoplasm. The enzyme catalyses D-sedoheptulose 7-phosphate + D-glyceraldehyde 3-phosphate = D-erythrose 4-phosphate + beta-D-fructose 6-phosphate. It functions in the pathway carbohydrate degradation; pentose phosphate pathway; D-glyceraldehyde 3-phosphate and beta-D-fructose 6-phosphate from D-ribose 5-phosphate and D-xylulose 5-phosphate (non-oxidative stage): step 2/3. Functionally, transaldolase is important for the balance of metabolites in the pentose-phosphate pathway. In Caldicellulosiruptor saccharolyticus (strain ATCC 43494 / DSM 8903 / Tp8T 6331), this protein is Probable transaldolase.